The sequence spans 77 residues: Putative sulfur carrier protein AF_0188 (77 aa).

The active-site Cysteine persulfide intermediate is cysteine 11.

This sequence belongs to the sulfur carrier protein TusA family.

The chain is Putative sulfur carrier protein AF_0188 from Archaeoglobus fulgidus (strain ATCC 49558 / DSM 4304 / JCM 9628 / NBRC 100126 / VC-16).